The primary structure comprises 191 residues: Dephospho-CoA kinase (191 aa).

Residues 3 to 191 (AIGITGSYAS…KLIKDLECRV (189 aa)) enclose the DPCK domain. Residue 11-16 (ASGKTF) participates in ATP binding.

Belongs to the CoaE family.

It is found in the cytoplasm. It catalyses the reaction 3'-dephospho-CoA + ATP = ADP + CoA + H(+). Its pathway is cofactor biosynthesis; coenzyme A biosynthesis; CoA from (R)-pantothenate: step 5/5. Its function is as follows. Catalyzes the phosphorylation of the 3'-hydroxyl group of dephosphocoenzyme A to form coenzyme A. This chain is Dephospho-CoA kinase, found in Rickettsia prowazekii (strain Madrid E).